The primary structure comprises 947 residues: DNA topoisomerase 1 (947 aa).

In terms of domain architecture, Toprim spans 16–140 (RRLVIVESPT…VKRMVFHEIT (125 aa)). Glu-22 and Asp-109 together coordinate Mg(2+). Residues 155–614 (DIDLVDAQET…FYFGGNHGVS (460 aa)) enclose the Topo IA-type catalytic domain. The interaction with DNA stretch occupies residues 189–194 (SAGRVQ). Catalysis depends on Tyr-343, which acts as the O-(5'-phospho-DNA)-tyrosine intermediate. Disordered regions lie at residues 733–771 (VLPK…GSLL), 846–888 (KRAG…GETN), and 910–947 (ADRR…QSPR). Over residues 915-934 (RGPVKRPAKKARKVPAKKAA) the composition is skewed to basic residues.

It belongs to the type IA topoisomerase family. In terms of assembly, monomer. It depends on Mg(2+) as a cofactor.

It catalyses the reaction ATP-independent breakage of single-stranded DNA, followed by passage and rejoining.. Functionally, releases the supercoiling and torsional tension of DNA, which is introduced during the DNA replication and transcription, by transiently cleaving and rejoining one strand of the DNA duplex. Introduces a single-strand break via transesterification at a target site in duplex DNA. The scissile phosphodiester is attacked by the catalytic tyrosine of the enzyme, resulting in the formation of a DNA-(5'-phosphotyrosyl)-enzyme intermediate and the expulsion of a 3'-OH DNA strand. The free DNA strand then undergoes passage around the unbroken strand, thus removing DNA supercoils. Finally, in the religation step, the DNA 3'-OH attacks the covalent intermediate to expel the active-site tyrosine and restore the DNA phosphodiester backbone. This Mycobacterium leprae (strain TN) protein is DNA topoisomerase 1.